Consider the following 980-residue polypeptide: Hypoxia up-regulated protein 1 (980 aa).

Residues 1–24 form the signal peptide; it reads MREKLSLWAIFCLVVAFLPSQTES. 2 disordered regions span residues 558-682 and 894-980; these read EEES…DIAV and KPKP…EDEL. Basic and acidic residues-rich tracts occupy residues 599 to 656 and 896 to 906; these read AGKE…PEEK and KPKDKAKDKNS. Residues 907–916 show a composition bias toward polar residues; the sequence is TSESSKANST. Composition is skewed to basic and acidic residues over residues 918–949 and 960–980; these read DAEKVIPPKTEDGAEKVKPAEEPPVVEEKAEE and TDDKTESTESSKSENHIEDEL. Residues 977–980 carry the Prevents secretion from ER motif; the sequence is EDEL.

Belongs to the heat shock protein 70 family.

Its subcellular location is the endoplasmic reticulum lumen. Functionally, has a pivotal role in cytoprotective cellular mechanisms triggered by oxygen deprivation. May play a role as a molecular chaperone and participate in protein folding. The polypeptide is Hypoxia up-regulated protein 1 (hyou1) (Danio rerio (Zebrafish)).